A 262-amino-acid chain; its full sequence is Cyclin-dependent kinase inhibitor 1 (262 aa).

The interval 140 to 212 is disordered; the sequence is SDVAEAGSEH…SAQQATRPKI (73 aa). Residues 160–169 are compositionally biased toward basic and acidic residues; it reads SGRDRERRET. Residues 198–208 are compositionally biased toward low complexity; the sequence is SAATASAQQAT.

It belongs to the CDI family. ICK/KRP subfamily. In terms of tissue distribution, expressed in roots, stems, leaves and apex.

Functionally, regulates the production of endosperm cells, affecting seed filling and embryo development. Regulates endoreduplication of endosperm cells. May play a role in the exit from the mitotic cell cycle during rice grain formation. Inhibitis leaf elongation rates by decreasing cell number, that is partly compensated by increased cell size. May not affect growth rate or cell size of the primary root. This is Cyclin-dependent kinase inhibitor 1 (KRP1) from Oryza sativa subsp. japonica (Rice).